A 398-amino-acid chain; its full sequence is Phosphoglycerate kinase (398 aa).

Substrate-binding positions include 21-23 (DFN), R36, 59-62 (HLGR), R119, and R157. Residues K208, G296, E327, and 354–357 (GGDS) each bind ATP.

This sequence belongs to the phosphoglycerate kinase family. Monomer.

It is found in the cytoplasm. The catalysed reaction is (2R)-3-phosphoglycerate + ATP = (2R)-3-phospho-glyceroyl phosphate + ADP. The protein operates within carbohydrate degradation; glycolysis; pyruvate from D-glyceraldehyde 3-phosphate: step 2/5. This chain is Phosphoglycerate kinase, found in Streptococcus pneumoniae serotype 4 (strain ATCC BAA-334 / TIGR4).